A 304-amino-acid polypeptide reads, in one-letter code: Ribosomal protein L11 methyltransferase (304 aa).

Residues threonine 147, glycine 168, aspartate 190, and asparagine 238 each coordinate S-adenosyl-L-methionine.

It belongs to the methyltransferase superfamily. PrmA family.

It is found in the cytoplasm. The enzyme catalyses L-lysyl-[protein] + 3 S-adenosyl-L-methionine = N(6),N(6),N(6)-trimethyl-L-lysyl-[protein] + 3 S-adenosyl-L-homocysteine + 3 H(+). Its function is as follows. Methylates ribosomal protein L11. The protein is Ribosomal protein L11 methyltransferase of Prochlorococcus marinus (strain SARG / CCMP1375 / SS120).